We begin with the raw amino-acid sequence, 396 residues long: NADH-quinone oxidoreductase subunit D (396 aa).

The protein belongs to the complex I 49 kDa subunit family. NDH-1 is composed of 14 different subunits. Subunits NuoB, C, D, E, F, and G constitute the peripheral sector of the complex.

The protein resides in the cell inner membrane. The enzyme catalyses a quinone + NADH + 5 H(+)(in) = a quinol + NAD(+) + 4 H(+)(out). In terms of biological role, NDH-1 shuttles electrons from NADH, via FMN and iron-sulfur (Fe-S) centers, to quinones in the respiratory chain. The immediate electron acceptor for the enzyme in this species is believed to be ubiquinone. Couples the redox reaction to proton translocation (for every two electrons transferred, four hydrogen ions are translocated across the cytoplasmic membrane), and thus conserves the redox energy in a proton gradient. The polypeptide is NADH-quinone oxidoreductase subunit D (Brucella melitensis biotype 1 (strain ATCC 23456 / CCUG 17765 / NCTC 10094 / 16M)).